A 156-amino-acid polypeptide reads, in one-letter code: SsrA-binding protein (156 aa).

This sequence belongs to the SmpB family.

It localises to the cytoplasm. Required for rescue of stalled ribosomes mediated by trans-translation. Binds to transfer-messenger RNA (tmRNA), required for stable association of tmRNA with ribosomes. tmRNA and SmpB together mimic tRNA shape, replacing the anticodon stem-loop with SmpB. tmRNA is encoded by the ssrA gene; the 2 termini fold to resemble tRNA(Ala) and it encodes a 'tag peptide', a short internal open reading frame. During trans-translation Ala-aminoacylated tmRNA acts like a tRNA, entering the A-site of stalled ribosomes, displacing the stalled mRNA. The ribosome then switches to translate the ORF on the tmRNA; the nascent peptide is terminated with the 'tag peptide' encoded by the tmRNA and targeted for degradation. The ribosome is freed to recommence translation, which seems to be the essential function of trans-translation. The sequence is that of SsrA-binding protein from Clostridium beijerinckii (strain ATCC 51743 / NCIMB 8052) (Clostridium acetobutylicum).